Reading from the N-terminus, the 256-residue chain is PHD finger protein ALFIN-LIKE 6 (256 aa).

Residues 144–200 (SKDLSVNNNNSKSKPSGVKSRQSESLSKVAKMSSPPPKEEEEEEDESEDESEDDEQG) form a disordered region. Low complexity predominate over residues 146-163 (DLSVNNNNSKSKPSGVKS). A compositionally biased stretch (acidic residues) spans 182-199 (EEEEEEDESEDESEDDEQ). The segment at 200-252 (GAVCGACGDNYGTDEFWICCDACEKWFHGKCVKITPAKAEHIKHYKCPTCSNK) adopts a PHD-type zinc-finger fold.

The protein belongs to the Alfin family. In terms of assembly, interacts with H3K4me3 and to a lesser extent with H3K4me2. Ubiquitously expressed.

It is found in the nucleus. Functionally, histone-binding component that specifically recognizes H3 tails trimethylated on 'Lys-4' (H3K4me3), which mark transcription start sites of virtually all active genes. The chain is PHD finger protein ALFIN-LIKE 6 (AL6) from Arabidopsis thaliana (Mouse-ear cress).